We begin with the raw amino-acid sequence, 158 residues long: Male-specific protein scotti (158 aa).

Residues 24–43 (NVPDGNGDGDGDGDGDGNDA) form a disordered region. A compositionally biased stretch (acidic residues) spans 30–42 (GDGDGDGDGDGND).

It belongs to the male-specific scotti family.

In terms of biological role, post-meiotically transcribed gene that has a role in late spermiogenesis; required for actin cone progression during spermatid individualization. This Drosophila virilis (Fruit fly) protein is Male-specific protein scotti.